A 475-amino-acid chain; its full sequence is Ankyrin repeat, SAM and basic leucine zipper domain-containing protein 1 (475 aa).

Positions 1–25 (MAAGALRGLPVAGGGESSESEDDGW) are disordered. Phosphoserine is present on residues Ser-17, Ser-18, and Ser-20. ANK repeat units lie at residues 45–74 (EKKE…SVDS), 78–107 (YGWT…NASF), 110–144 (DKQT…DPNV), 148–177 (RLMT…EVNT), 181–210 (NGYT…NKML), and 214–243 (DGKM…PLEG). The region spanning 272–334 (SYTAFGDLEV…KILAALKELQ (63 aa)) is the SAM domain.

Interacts with DDX4, PIWIL1, RANBP9 and TDRD1.

The protein resides in the cytoplasm. In terms of biological role, plays a central role during spermatogenesis by repressing transposable elements and preventing their mobilization, which is essential for the germline integrity. Acts via the piRNA metabolic process, which mediates the repression of transposable elements during meiosis by forming complexes composed of piRNAs and Piwi proteins and governs the methylation and subsequent repression of transposons. Its association with pi-bodies suggests a participation in the primary piRNAs metabolic process. Required prior to the pachytene stage to facilitate the production of multiple types of piRNAs, including those associated with repeats involved in the regulation of retrotransposons. May act by mediating protein-protein interactions during germ cell maturation. The sequence is that of Ankyrin repeat, SAM and basic leucine zipper domain-containing protein 1 (ASZ1) from Papio anubis (Olive baboon).